A 79-amino-acid chain; its full sequence is Conotoxin Vi6.4 (79 aa).

The N-terminal stretch at 1–22 (MKLTCVLIITVLFLTASQLITA) is a signal peptide. Positions 23-47 (DYSGDKRQYRAVRLRDEMRNFKGAR) are excised as a propeptide. 3 disulfides stabilise this stretch: C49/C62, C56/C67, and C61/C77. 4-hydroxyproline is present on residues P60 and P63.

This sequence belongs to the conotoxin O1 superfamily. In terms of tissue distribution, expressed by the venom duct.

The protein localises to the secreted. Its function is as follows. Ion channel inhibitor that inhibits the increase in intracellular calcium upon depolarization in DRG neurons. In vivo, both intraperitoneal and intracranial injections into mice induce hyperactivity. The chain is Conotoxin Vi6.4 from Conus virgo (Virgin cone).